A 374-amino-acid chain; its full sequence is Putative glutamate--cysteine ligase 2 (374 aa).

This sequence belongs to the glutamate--cysteine ligase type 2 family. YbdK subfamily.

It catalyses the reaction L-cysteine + L-glutamate + ATP = gamma-L-glutamyl-L-cysteine + ADP + phosphate + H(+). Its function is as follows. ATP-dependent carboxylate-amine ligase which exhibits weak glutamate--cysteine ligase activity. The chain is Putative glutamate--cysteine ligase 2 from Laribacter hongkongensis (strain HLHK9).